The following is a 419-amino-acid chain: Tyrosine--tRNA ligase (419 aa).

Tyr34 lines the L-tyrosine pocket. The 'HIGH' region motif lies at 39–48 (PTADSLHLGN). L-tyrosine is bound by residues Tyr169 and Gln173. A 'KMSKS' region motif is present at residues 229 to 233 (KFGKS). Residue Lys232 coordinates ATP. Positions 353–419 (LTLVELLISA…GKKKNFVLTY (67 aa)) constitute an S4 RNA-binding domain.

Belongs to the class-I aminoacyl-tRNA synthetase family. TyrS type 1 subfamily. Homodimer.

Its subcellular location is the cytoplasm. It carries out the reaction tRNA(Tyr) + L-tyrosine + ATP = L-tyrosyl-tRNA(Tyr) + AMP + diphosphate + H(+). Functionally, catalyzes the attachment of tyrosine to tRNA(Tyr) in a two-step reaction: tyrosine is first activated by ATP to form Tyr-AMP and then transferred to the acceptor end of tRNA(Tyr). The sequence is that of Tyrosine--tRNA ligase from Lactococcus lactis subsp. lactis (strain IL1403) (Streptococcus lactis).